A 243-amino-acid chain; its full sequence is 3-deoxy-manno-octulosonate cytidylyltransferase (243 aa).

Belongs to the KdsB family.

The protein localises to the cytoplasm. It carries out the reaction 3-deoxy-alpha-D-manno-oct-2-ulosonate + CTP = CMP-3-deoxy-beta-D-manno-octulosonate + diphosphate. It functions in the pathway nucleotide-sugar biosynthesis; CMP-3-deoxy-D-manno-octulosonate biosynthesis; CMP-3-deoxy-D-manno-octulosonate from 3-deoxy-D-manno-octulosonate and CTP: step 1/1. The protein operates within bacterial outer membrane biogenesis; lipopolysaccharide biosynthesis. Activates KDO (a required 8-carbon sugar) for incorporation into bacterial lipopolysaccharide in Gram-negative bacteria. This Bartonella quintana (strain Toulouse) (Rochalimaea quintana) protein is 3-deoxy-manno-octulosonate cytidylyltransferase.